A 95-amino-acid polypeptide reads, in one-letter code: Co-chaperonin GroES (95 aa).

This sequence belongs to the GroES chaperonin family. Heptamer of 7 subunits arranged in a ring. Interacts with the chaperonin GroEL.

The protein localises to the cytoplasm. Its function is as follows. Together with the chaperonin GroEL, plays an essential role in assisting protein folding. The GroEL-GroES system forms a nano-cage that allows encapsulation of the non-native substrate proteins and provides a physical environment optimized to promote and accelerate protein folding. GroES binds to the apical surface of the GroEL ring, thereby capping the opening of the GroEL channel. This is Co-chaperonin GroES from Rickettsia bellii (strain RML369-C).